The chain runs to 614 residues: Chaperone protein DnaK (614 aa).

Thr173 is subject to Phosphothreonine; by autocatalysis. Basic and acidic residues-rich tracts occupy residues 490–509 (EENA…RNEA) and 529–542 (EEDK…KEAL). Disordered regions lie at residues 490–510 (EENA…NEAD), 524–555 (GENI…DDIK), and 575–614 (QAAQ…DNQK). A compositionally biased stretch (low complexity) spans 575 to 584 (QAAQAQQQAQ). The span at 599–614 (ADFKEVKDDDNQDNQK) shows a compositional bias: basic and acidic residues.

Belongs to the heat shock protein 70 family.

Acts as a chaperone. The chain is Chaperone protein DnaK from Staphylococcus saprophyticus subsp. saprophyticus (strain ATCC 15305 / DSM 20229 / NCIMB 8711 / NCTC 7292 / S-41).